We begin with the raw amino-acid sequence, 169 residues long: Putative cysteine protease YraA (169 aa).

Residues 3 to 169 (KKIAVLVTDQ…FNRESLNLLK (167 aa)) enclose the PfpI endopeptidase domain. Residue Cys103 is the Nucleophile of the active site. The active site involves His104.

It belongs to the peptidase C56 family.

Functions in the protection against aldehyde-stress, possibly by degrading damaged proteins. The protein is Putative cysteine protease YraA (yraA) of Bacillus subtilis (strain 168).